Reading from the N-terminus, the 530-residue chain is MSQWLAFATQLVGVRKSHQLALQFVDLLTQGLDLSDSLLLLPSSDGRLLVPHDPQRQFAWSVTDFDVPFAHVLQSSNAMHLTAEELVFWQSNRTFSQLTSRVGMFDSVWIQPLPMDTRQVHSILLLMGESHGIVSAFENADFLKFIEVFSQQWSLLNDMEREEQRRLELKQSLTDIERDSAQRSLANALSRTLIGESAAMQKLREQIVSAANSQLSVMVQGETGTGKELVAAAVHELSSRKSAPFVAINCAAIPEHLLESELFGYCKGAFSGADSDKQGLIAQANGGTLFLDEIGDMPLTLQAKLLRVLESRTFRPLGGKQELSSDFRLVSATHVNLLDQVRKKEFRQDLYYRLFQYPITLPRLAARLEDIELLSEHFVRVFNLQHNTRIRGLNYRAIDCLKQYDFPGNVRELKHLIEFGCAQTADGTQVEASCFAHRLQTLPCLAPEATPVAVSVETENVDLEPSVALAGEPNFAVIHDLKQAVSQFEALIISERLNRFAGDRAKAAKSLGIPKRTLAYKCLKLEIKTP.

The Sigma-54 factor interaction domain occupies 193 to 422 (LIGESAAMQK…LKHLIEFGCA (230 aa)). ATP-binding positions include 221–228 (GETGTGKE) and 284–293 (ANGGTLFLDE).

Its function is as follows. Transcriptional regulator of the type VI secretion system. The polypeptide is Transcriptional regulator VasH (Vibrio cholerae serotype O1 (strain ATCC 39315 / El Tor Inaba N16961)).